A 207-amino-acid polypeptide reads, in one-letter code: Ras-related protein Rab-7a (207 aa).

The residue at position 2 (Thr-2) is an N-acetylthreonine. GTP-binding residues include Ser-17, Gly-18, Val-19, Gly-20, Lys-21, Thr-22, Ser-23, Ser-34, Asn-35, Tyr-37, and Thr-40. Mg(2+) is bound at residue Thr-22. The Switch 1 signature appears at 28 to 41 (YVNKKFSNQYKATI). The Mg(2+) site is built by Thr-40 and Asp-63. Position 66 (Gly-66) interacts with GTP. The Switch 2 signature appears at 67-82 (QERFQSLGVAFYRGAD). Ser-72 is subject to Phosphoserine. Residues Asn-125, Lys-126, Asp-128, Ala-156, and Lys-157 each coordinate GTP. Glycyl lysine isopeptide (Lys-Gly) (interchain with G-Cter in ubiquitin) cross-links involve residues Lys-191 and Lys-194. S-geranylgeranyl cysteine attachment occurs at residues Cys-205 and Cys-207. Cys-207 is modified (cysteine methyl ester).

It belongs to the small GTPase superfamily. Rab family. As to quaternary structure, interacts with NTRK1/TRKA. Interacts with RILP. Interacts with PSMA7. Interacts with RNF115. Interacts with FYCO1. Interacts with the PIK3C3/VPS34-PIK3R4 complex. The GTP-bound form interacts with OSBPL1A. The GTP-bound form interacts with RAC1. Interacts with CLN3. Interacts with CHM, the substrate-binding subunit of the Rab geranylgeranyltransferase complex. Interacts with C9orf72. Does not interact with HPS4 and the BLOC-3 complex (heterodimer of HPS1 and HPS4). Interacts with CLN5. Interacts with PLEKHM1 (via N- and C-terminus). Interacts with PRPH; the interaction is direct. Interacts with VPS13A. The GDP-bound form interacts with RIMOC1. Interacts with the MON1A-CCZ1B complex and this interaction is enhanced in the presence of RIMOC1. Interacts with VPS39 and VPS41. Forms a ternary complex with LAMP2 and RUFY4; the interaction with LAMP2 is mediated by RUFY4 (via RUN and coiled coil domains). It depends on Mg(2+) as a cofactor. Post-translationally, deubiquitination at Lys-191 and Lys-194 by USP32. Phosphorylated at Ser-72 by LRRK1; phosphorylation is dependent on protein kinase C (PKC) activation of LRRK1. In terms of processing, prenylated. Prenylation is required for association with cellular membranes.

Its subcellular location is the cytoplasmic vesicle. It is found in the phagosome membrane. It localises to the late endosome membrane. The protein localises to the lysosome membrane. The protein resides in the melanosome membrane. Its subcellular location is the autophagosome membrane. It is found in the lipid droplet. It localises to the endosome membrane. The protein localises to the mitochondrion membrane. It carries out the reaction GTP + H2O = GDP + phosphate + H(+). Its activity is regulated as follows. Regulated by guanine nucleotide exchange factors (GEFs) which promote the exchange of bound GDP for free GTP. Regulated by GTPase activating proteins (GAPs) which increase the GTP hydrolysis activity. Inhibited by GDP dissociation inhibitors (GDIs). Its function is as follows. The small GTPases Rab are key regulators of intracellular membrane trafficking, from the formation of transport vesicles to their fusion with membranes. Rabs cycle between an inactive GDP-bound form and an active GTP-bound form that is able to recruit to membranes different sets of downstream effectors directly responsible for vesicle formation, movement, tethering and fusion. In its active state, RAB7A binds to a variety of effector proteins playing a key role in the regulation of endo-lysosomal trafficking. Governs early-to-late endosomal maturation, microtubule minus-end as well as plus-end directed endosomal migration and positioning, and endosome-lysosome transport through different protein-protein interaction cascades. Also plays a central role in growth-factor-mediated cell signaling, nutrient-transporter-mediated nutrient uptake, neurotrophin transport in the axons of neurons and lipid metabolism. Also involved in regulation of some specialized endosomal membrane trafficking, such as maturation of melanosomes, pathogen-induced phagosomes (or vacuoles) and autophagosomes. Plays a role in the maturation and acidification of phagosomes that engulf pathogens, such as S.aureus and Mycobacteria. Plays a role in the fusion of phagosomes with lysosomes. In concert with RAC1, plays a role in regulating the formation of RBs (ruffled borders) in osteoclasts. Controls the endosomal trafficking and neurite outgrowth signaling of NTRK1/TRKA. Regulates the endocytic trafficking of the EGF-EGFR complex by regulating its lysosomal degradation. Involved in the ADRB2-stimulated lipolysis through lipophagy, a cytosolic lipase-independent autophagic pathway. Required for the exosomal release of SDCBP, CD63 and syndecan. Required for vesicular trafficking and cell surface expression of ACE2. May play a role in PRPH neuronal intermediate filament assembly. In Bos taurus (Bovine), this protein is Ras-related protein Rab-7a (RAB7A).